Consider the following 123-residue polypeptide: MSITKDQILEAFAAMSVMEVVELIEAMEEKFGVSAAAAVVAGGAADAGAAAEEKTEFDVVLTSHGDNKVGVIKAIRGATGLGLKEAKAMAEAAPVAVKEAVSKEEAEALKKELEEAGAQVEIK.

It belongs to the bacterial ribosomal protein bL12 family. As to quaternary structure, homodimer. Part of the ribosomal stalk of the 50S ribosomal subunit. Forms a multimeric L10(L12)X complex, where L10 forms an elongated spine to which 2 to 4 L12 dimers bind in a sequential fashion. Binds GTP-bound translation factors.

In terms of biological role, forms part of the ribosomal stalk which helps the ribosome interact with GTP-bound translation factors. Is thus essential for accurate translation. The protein is Large ribosomal subunit protein bL12 of Shewanella amazonensis (strain ATCC BAA-1098 / SB2B).